Reading from the N-terminus, the 709-residue chain is DNA topoisomerase 1 (709 aa).

Positions 3-127 constitute a Toprim domain; the sequence is KNLVVIESPN…KCKRITFNEI (125 aa). Mg(2+) is bound by residues Glu9 and Asp95. The 456-residue stretch at 143-598 folds into the Topo IA-type catalytic domain; the sequence is DLNWVESQFA…FWTNFKSDVK (456 aa). The interval 176–181 is interaction with DNA; that stretch reads SAGRVQ. Tyr334 acts as the O-(5'-phospho-DNA)-tyrosine intermediate in catalysis. 2 consecutive C4-type zinc fingers follow at residues 618 to 646 and 667 to 696; these read CPKC…FPKC and CPEC…FPNC.

It belongs to the type IA topoisomerase family. Monomer. Requires Mg(2+) as cofactor.

It catalyses the reaction ATP-independent breakage of single-stranded DNA, followed by passage and rejoining.. In terms of biological role, releases the supercoiling and torsional tension of DNA, which is introduced during the DNA replication and transcription, by transiently cleaving and rejoining one strand of the DNA duplex. Introduces a single-strand break via transesterification at a target site in duplex DNA. The scissile phosphodiester is attacked by the catalytic tyrosine of the enzyme, resulting in the formation of a DNA-(5'-phosphotyrosyl)-enzyme intermediate and the expulsion of a 3'-OH DNA strand. The free DNA strand then undergoes passage around the unbroken strand, thus removing DNA supercoils. Finally, in the religation step, the DNA 3'-OH attacks the covalent intermediate to expel the active-site tyrosine and restore the DNA phosphodiester backbone. The sequence is that of DNA topoisomerase 1 from Mycoplasma genitalium (strain ATCC 33530 / DSM 19775 / NCTC 10195 / G37) (Mycoplasmoides genitalium).